A 373-amino-acid polypeptide reads, in one-letter code: Chaperone protein DnaJ (373 aa).

Residues 4-68 form the J domain; it reads NYYQILGVSK…QTRAAYDRLG (65 aa). The CR-type zinc-finger motif lies at 136-214; it reads GIEKNISFSS…CHGMGRYHKQ (79 aa). Zn(2+) contacts are provided by cysteine 149, cysteine 152, cysteine 166, cysteine 169, cysteine 188, cysteine 191, cysteine 202, and cysteine 205. CXXCXGXG motif repeat units lie at residues 149–156, 166–173, 188–195, and 202–209; these read CDTCHGSG, CDACSGVG, CHKCQGNG, and CKKCHGMG.

The protein belongs to the DnaJ family. As to quaternary structure, homodimer. The cofactor is Zn(2+).

It localises to the cytoplasm. Functionally, participates actively in the response to hyperosmotic and heat shock by preventing the aggregation of stress-denatured proteins and by disaggregating proteins, also in an autonomous, DnaK-independent fashion. Unfolded proteins bind initially to DnaJ; upon interaction with the DnaJ-bound protein, DnaK hydrolyzes its bound ATP, resulting in the formation of a stable complex. GrpE releases ADP from DnaK; ATP binding to DnaK triggers the release of the substrate protein, thus completing the reaction cycle. Several rounds of ATP-dependent interactions between DnaJ, DnaK and GrpE are required for fully efficient folding. Also involved, together with DnaK and GrpE, in the DNA replication of plasmids through activation of initiation proteins. This chain is Chaperone protein DnaJ, found in Rickettsia peacockii (strain Rustic).